The following is a 124-amino-acid chain: Chemotaxis protein CheY1 (124 aa).

The region spanning K2 to L120 is the Response regulatory domain. The Mg(2+) site is built by D7, D8, D53, and N55. D53 bears the 4-aspartylphosphate mark.

Interacts (when phosphorylated) with FliM. The cofactor is Mg(2+). In terms of processing, phosphorylated by CheAY. Dephosphorylated (inactivated) by CheZ.

The protein localises to the cytoplasm. In terms of biological role, chemotactic response regulator protein that modulates the rotation direction of bacterial flagellar motors. Plays an important role in the colonization and infection of Helicobacter pylori. Upon phosphorylation by CheA, interacts with the flagellar motor protein FliM to cause clockwise flagellar rotation and bacterial reversals, as opposed to straight swimming when CheY1 is not phosphorylated. This is Chemotaxis protein CheY1 (cheY1) from Helicobacter pylori (strain J99 / ATCC 700824) (Campylobacter pylori J99).